Here is a 1096-residue protein sequence, read N- to C-terminus: Centrosome-associated zinc finger protein Cp190 (1096 aa).

The tract at residues 1 to 209 (MGEVKSVKVD…GDSSNVKQEP (209 aa)) is involved in microtubule and centrosome binding. The 68-residue stretch at 30-97 (CDLTLQFRDN…MYTGTLEFEL (68 aa)) folds into the BTB domain. The interval 126 to 308 (MENVNRQQRP…PQGTQTQLEH (183 aa)) is disordered. Polar residues-rich tracts occupy residues 175–213 (RANT…TSPF) and 220–230 (YNNNKRPAQTS). A phosphoserine mark is found at serine 197 and serine 211. Positions 207–271 (QEPTSPFEQL…GDNDPEYDGG (65 aa)) are nuclear localization. Residues 210–245 (TSPFEQLRKGYNNNKRPAQTSLLSPPSKKPSLEEVK) form an involved in interaction with cliff region. Threonine 229 carries the post-translational modification Phosphothreonine. Serine 233 is subject to Phosphoserine. Residues 239 to 252 (PSLEEVKEFAEQQR) show a composition bias toward basic and acidic residues. Positions 245–468 (KEFAEQQRMR…IAQGAENTTG (224 aa)) are centrosomal targeting M domain involved in interaction with ZIPIC. Residues 292-305 (STSKQQSPQGTQTQ) are compositionally biased toward low complexity. 2 positions are modified to phosphoserine: serine 298 and serine 319. The interval 309–390 (GSTTIILKQD…KPPANQSSAT (82 aa)) is involved in interaction with cliff. A disordered region spans residues 366 to 449 (NTPAAPTEKS…ANTAAAQKRR (84 aa)). The segment at 385–508 (NQSSATTSPH…KETIDPALCE (124 aa)) is centrosomal localization and interaction with microtubules. Residues 412 to 445 (AQQKAASSQQKSGTSQTTGNQGTGANPPANTAAA) show a composition bias toward low complexity. 2 C2H2-type zinc fingers span residues 538-561 (AECA…NEVH) and 567-590 (QQCI…KSYH). Threonine 603 is subject to Phosphothreonine. Acidic residues predominate over residues 608–625 (LGSQDEEEEAEGDEEQEP). Residues 608–630 (LGSQDEEEEAEGDEEQEPEQTGK) form a disordered region. Phosphoserine occurs at positions 610, 708, and 723. The segment at 710-733 (PEAEHVKQETDEKSLAGTEEEYDD) is disordered. Residues 711 to 723 (EAEHVKQETDEKS) are compositionally biased toward basic and acidic residues. Residue threonine 727 is modified to Phosphothreonine. 4 positions are modified to phosphoserine: serine 745, serine 748, serine 757, and serine 760. The interval 770-927 (LIAESEEQSN…EDSPIPHSDS (158 aa)) is disordered. Residues 777 to 799 (QSNKEPKSDKPRDDISEKLKELT) show a composition bias toward basic and acidic residues. The segment covering 802-812 (WTEDENDDDVD) has biased composition (acidic residues). Position 817 is a phosphothreonine (threonine 817). Basic and acidic residues-rich tracts occupy residues 825-834 (ANKDPEPTVH), 849-861 (KGPE…KASE), 882-907 (EKMD…KEAE), and 914-927 (EFIK…HSDS). 3 positions are modified to phosphoserine: serine 920, serine 925, and serine 927. Phosphothreonine is present on threonine 936. Serine 938 is modified (phosphoserine). Basic and acidic residues-rich tracts occupy residues 960–973 (IAEA…KDIV) and 1011–1035 (AAEK…EDKP). The tract at residues 960–1096 (IAEAEKPDQE…GVSAAAKEEL (137 aa)) is disordered. A phosphoserine mark is found at serine 1071 and serine 1074. A compositionally biased stretch (acidic residues) spans 1076-1086 (WGDDDEDEDEN).

Homodimerizes via the N-terminal BTB domain. Component of the gypsy chromatin insulator complex, composed of Cp190, mod(mdg4) and su(Hw). The gypsy chromatin insulator complex interacts with Topors via mod(mdg4) and su(Hw). Interacts with Cp60. Interacts with inv. Interacts with Nup98. Interacts (via BTB domain) with pita (via region between the ZAD domain and the first zinc finger domain); the interaction is direct. Interacts with ZIPIC (via region between the ZAD domain and the first zinc finger domain); the interaction is direct. Interacts (via regions between the BTB domain and first zinc finger domain) with cliff (via regions flanking MADF domain 1); the interaction is probably direct. Associates (via N-terminus) with microtubules; the interaction is direct, is enhanced by dimerization and involves multiple regions within the N-terminus. Microtubule association is enriched at growing plus ends. Expressed in spermatids but not in mature spermatozoa. Localizes within the spermatids to a sheath of microtubules around the nucleus and to microtubules within the tail.

The protein resides in the nucleus. The protein localises to the cytoplasm. Its subcellular location is the cytoskeleton. It localises to the microtubule organizing center. It is found in the centrosome. The protein resides in the chromosome. The protein localises to the nucleoplasm. Plays a central role in chromatin domain organization and boundary function through recruitment by a range of insulator DNA-binding proteins, including ZIPIC, pita, CTCF, su(Hw), cliff and others. Together with pita and CTCF cooperatively binds to and regulates the activity of the Miscadastral pigmentation (MCP) insulator. Cooperatively recruited to the front-ultraabdominal (Fub) boundary by pita, su(Hw) and cliff. Recruitment of Cp190 together with Chro/chromator induces chromatin decondensation. Component of the gypsy chromatin insulator complex which is required for the function of the gypsy chromatin insulator and other endogenous chromatin insulators. Chromatin insulators are regulatory elements that establish independent domains of transcriptional activity within eukaryotic genomes. Insulators have two defining properties; they can block the communication between an enhancer and a promoter when placed between them and can also buffer transgenes from position effect variegation (PEV). Insulators are proposed to structure the chromatin fiber into independent domains of differing transcriptional potential by promoting the formation of distinct chromatin loops to form topologically associating domains (TADs). This chromatin looping may involve the formation of insulator bodies, where homotypic interactions between individual subunits of the insulator complex could promote the clustering of widely spaced insulators at the nuclear periphery. Within the gypsy insulator complex, this protein may directly bind to insulator DNA at sites distinct from those recognized by su(Hw). Required during embryogenesis for axial expansion, an actin/myosin dependent process that distributes the dividing nuclei along the anterior-posterior axis of the syncytial embryo. Associates with centrosomes and interphase microtubules during mitosis, and recruits CP60; may have a role in maintaining centrosome and spindle integrity. This is Centrosome-associated zinc finger protein Cp190 from Drosophila melanogaster (Fruit fly).